A 274-amino-acid chain; its full sequence is Reaction center protein L chain (274 aa).

Topologically, residues 2-32 are cytoplasmic; sequence ALLSFERKYRVRGGTLIGGDLFDFWVGPYFV. The helical transmembrane segment at 33–53 threads the bilayer; it reads GFFGVSAIFFIFLGVSLIGYA. Topologically, residues 54–83 are periplasmic; that stretch reads ASQGPTWDPFAISINPPDLKYGLGAAPLLE. A helical transmembrane segment spans residues 84-111; sequence GGFWQAITVCALGAFISWMLREVEISRK. Over 112-115 the chain is Cytoplasmic; that stretch reads LGIG. The chain crosses the membrane as a helical span at residues 116–139; that stretch reads WHVPLAFCVPIFMFCVLQVFRPLL. Residues 140–170 lie on the Periplasmic side of the membrane; sequence LGSWGHAFPYGILSHLDWVNNFGYQYLNWHY. The (7R,8Z)-bacteriochlorophyll b site is built by histidine 154 and histidine 174. The chain crosses the membrane as a helical span at residues 171–198; sequence NPGHMSSVSFLFVNAMALGLHGGLILSV. Histidine 191 is a Fe cation binding site. Over 199-225 the chain is Cytoplasmic; sequence ANPGDGDKVKTAEHENQYFRDVVGYSI. Residue phenylalanine 217 participates in a ubiquinone binding. Residues 226 to 249 traverse the membrane as a helical segment; the sequence is GALSIHRLGLFLASNIFLTGAFGT. A Fe cation-binding site is contributed by histidine 231. Over 250–274 the chain is Periplasmic; that stretch reads IASGPFWTRGWPEWWGWWLDIPFWS.

This sequence belongs to the reaction center PufL/M/PsbA/D family. Reaction center is composed of four bacteriochlorophylls, two bacteriopheophytins, two ubiquinones, one iron, and three highly hydrophobic polypeptide chains (designated L, M, and H).

It is found in the cellular chromatophore membrane. In terms of biological role, the reaction center is a membrane-bound complex that mediates the initial photochemical event in the electron transfer process of photosynthesis. The polypeptide is Reaction center protein L chain (pufL) (Blastochloris viridis (Rhodopseudomonas viridis)).